Consider the following 247-residue polypeptide: DNA repair protein RecO (247 aa).

The protein belongs to the RecO family.

Functionally, involved in DNA repair and RecF pathway recombination. In Brucella abortus (strain 2308), this protein is DNA repair protein RecO.